A 337-amino-acid polypeptide reads, in one-letter code: uncharacterized protein (337 aa).

Transmembrane regions (helical) follow at residues 241–261 (FTLL…GAFI) and 273–293 (ASLI…IGII).

This sequence belongs to the glycosyltransferase 2 family.

The protein resides in the cell membrane. This is an uncharacterized protein from Bacillus subtilis (strain 168).